A 475-amino-acid chain; its full sequence is Ribulose bisphosphate carboxylase large chain (475 aa).

A propeptide spanning residues 1 to 2 is cleaved from the precursor; it reads MS. Pro-3 is subject to N-acetylproline. An N6,N6,N6-trimethyllysine modification is found at Lys-14. Residues Asn-123 and Thr-173 each contribute to the substrate site. The Proton acceptor role is filled by Lys-175. Position 177 (Lys-177) interacts with substrate. The Mg(2+) site is built by Lys-201, Asp-203, and Glu-204. Lys-201 is subject to N6-carboxylysine. The Proton acceptor role is filled by His-294. Substrate-binding residues include Arg-295, His-327, and Ser-379.

This sequence belongs to the RuBisCO large chain family. Type I subfamily. As to quaternary structure, heterohexadecamer of 8 large chains and 8 small chains; disulfide-linked. The disulfide link is formed within the large subunit homodimers. Mg(2+) serves as cofactor. The disulfide bond which can form in the large chain dimeric partners within the hexadecamer appears to be associated with oxidative stress and protein turnover.

It localises to the plastid. The protein localises to the chloroplast. It catalyses the reaction 2 (2R)-3-phosphoglycerate + 2 H(+) = D-ribulose 1,5-bisphosphate + CO2 + H2O. It carries out the reaction D-ribulose 1,5-bisphosphate + O2 = 2-phosphoglycolate + (2R)-3-phosphoglycerate + 2 H(+). Its function is as follows. RuBisCO catalyzes two reactions: the carboxylation of D-ribulose 1,5-bisphosphate, the primary event in carbon dioxide fixation, as well as the oxidative fragmentation of the pentose substrate in the photorespiration process. Both reactions occur simultaneously and in competition at the same active site. The chain is Ribulose bisphosphate carboxylase large chain from Nandina domestica (Heavenly bamboo).